We begin with the raw amino-acid sequence, 532 residues long: CTP synthase (532 aa).

Residues 1–267 form an amidoligase domain region; that stretch reads MAKFIFVTGG…QDIIIEQLQL (267 aa). Serine 13 contacts CTP. Serine 13 is a UTP binding site. Position 14-19 (14-19) interacts with ATP; it reads GLGKGI. Position 54 (tyrosine 54) interacts with L-glutamine. Aspartate 71 contacts ATP. Mg(2+) is bound by residues aspartate 71 and glutamate 141. Residues 148-150, 188-193, and lysine 224 each bind CTP; these read DIE and KTKPIQ. UTP contacts are provided by residues 188 to 193 and lysine 224; that span reads KTKPIQ. The Glutamine amidotransferase type-1 domain maps to 292 to 532; it reads EISFVGKYIE…FIKAIVENNK (241 aa). Glycine 354 serves as a coordination point for L-glutamine. The active-site Nucleophile; for glutamine hydrolysis is the cysteine 381. Residues 382 to 385, glutamate 405, and arginine 461 each bind L-glutamine; that span reads LGMQ. Residues histidine 506 and glutamate 508 contribute to the active site.

Belongs to the CTP synthase family. Homotetramer.

It carries out the reaction UTP + L-glutamine + ATP + H2O = CTP + L-glutamate + ADP + phosphate + 2 H(+). The catalysed reaction is L-glutamine + H2O = L-glutamate + NH4(+). It catalyses the reaction UTP + NH4(+) + ATP = CTP + ADP + phosphate + 2 H(+). It functions in the pathway pyrimidine metabolism; CTP biosynthesis via de novo pathway; CTP from UDP: step 2/2. Its activity is regulated as follows. Allosterically activated by GTP, when glutamine is the substrate; GTP has no effect on the reaction when ammonia is the substrate. The allosteric effector GTP functions by stabilizing the protein conformation that binds the tetrahedral intermediate(s) formed during glutamine hydrolysis. Inhibited by the product CTP, via allosteric rather than competitive inhibition. Catalyzes the ATP-dependent amination of UTP to CTP with either L-glutamine or ammonia as the source of nitrogen. Regulates intracellular CTP levels through interactions with the four ribonucleotide triphosphates. This is CTP synthase from Mycoplasma mycoides subsp. mycoides SC (strain CCUG 32753 / NCTC 10114 / PG1).